The following is a 310-amino-acid chain: p-hydroxybenzoic acid efflux pump subunit AaeA (310 aa).

The chain crosses the membrane as a helical span at residues 12 to 32 (AITLVLVILAFIAIFRAWVYY).

It belongs to the membrane fusion protein (MFP) (TC 8.A.1) family.

The protein resides in the cell inner membrane. Functionally, forms an efflux pump with AaeB. The protein is p-hydroxybenzoic acid efflux pump subunit AaeA of Citrobacter koseri (strain ATCC BAA-895 / CDC 4225-83 / SGSC4696).